The following is a 694-amino-acid chain: Methionine--tRNA ligase (694 aa).

The 'HIGH' region signature appears at 14–24; it reads PYANGPIHLGH. Zn(2+) is bound by residues cysteine 145, cysteine 148, cysteine 158, and cysteine 161. The 'KMSKS' region signature appears at 330–334; it reads KMSKS. Residue lysine 333 coordinates ATP. Residues 558 to 579 form a disordered region; it reads SLQATAGQPEPHSQVRHAEHQQ. The region spanning 593–694 is the tRNA-binding domain; the sequence is DFAKVDLRIA…EGAQPGMKVK (102 aa).

Belongs to the class-I aminoacyl-tRNA synthetase family. MetG type 1 subfamily. Homodimer. Zn(2+) is required as a cofactor.

The protein resides in the cytoplasm. It catalyses the reaction tRNA(Met) + L-methionine + ATP = L-methionyl-tRNA(Met) + AMP + diphosphate. Is required not only for elongation of protein synthesis but also for the initiation of all mRNA translation through initiator tRNA(fMet) aminoacylation. This chain is Methionine--tRNA ligase, found in Methylococcus capsulatus (strain ATCC 33009 / NCIMB 11132 / Bath).